A 475-amino-acid polypeptide reads, in one-letter code: Putative aldehyde dehydrogenase SERP1729 (475 aa).

Residue 201 to 207 coordinates NAD(+); sequence GDGSGVG. Catalysis depends on residues E245 and C279.

The protein belongs to the aldehyde dehydrogenase family.

The catalysed reaction is an aldehyde + NAD(+) + H2O = a carboxylate + NADH + 2 H(+). This is Putative aldehyde dehydrogenase SERP1729 from Staphylococcus epidermidis (strain ATCC 35984 / DSM 28319 / BCRC 17069 / CCUG 31568 / BM 3577 / RP62A).